A 392-amino-acid polypeptide reads, in one-letter code: Probable inactive serine/threonine-protein kinase DDB_G0280855 (392 aa).

A Protein kinase domain is found at 46–349 (ITKKTIYACD…IERIIQHPYF (304 aa)). Residues 52–60 (YACDINGTM) and K75 contribute to the ATP site.

The protein belongs to the protein kinase superfamily. CMGC Ser/Thr protein kinase family. MAP kinase subfamily.

This Dictyostelium discoideum (Social amoeba) protein is Probable inactive serine/threonine-protein kinase DDB_G0280855.